A 140-amino-acid polypeptide reads, in one-letter code: 3-hydroxyacyl-[acyl-carrier-protein] dehydratase FabZ (140 aa).

H47 is an active-site residue.

It belongs to the thioester dehydratase family. FabZ subfamily.

The protein resides in the cytoplasm. It catalyses the reaction a (3R)-hydroxyacyl-[ACP] = a (2E)-enoyl-[ACP] + H2O. In terms of biological role, involved in unsaturated fatty acids biosynthesis. Catalyzes the dehydration of short chain beta-hydroxyacyl-ACPs and long chain saturated and unsaturated beta-hydroxyacyl-ACPs. The chain is 3-hydroxyacyl-[acyl-carrier-protein] dehydratase FabZ from Streptococcus gordonii (strain Challis / ATCC 35105 / BCRC 15272 / CH1 / DL1 / V288).